We begin with the raw amino-acid sequence, 360 residues long: Phospho-N-acetylmuramoyl-pentapeptide-transferase (360 aa).

The next 10 membrane-spanning stretches (helical) occupy residues 21-41 (YLSF…LWMG), 73-93 (TMGG…WANL), 94-114 (SNPY…VGFV), 132-152 (WKYF…YAYG), 168-188 (VMPQ…VGTS), 199-219 (GLAI…AWAT), 236-256 (ASEL…FLWF), 263-283 (VFMG…IAVL), 288-308 (LVLV…ILQV), and 338-358 (VIVR…ATLK).

This sequence belongs to the glycosyltransferase 4 family. MraY subfamily. It depends on Mg(2+) as a cofactor.

The protein localises to the cell inner membrane. The catalysed reaction is UDP-N-acetyl-alpha-D-muramoyl-L-alanyl-gamma-D-glutamyl-meso-2,6-diaminopimeloyl-D-alanyl-D-alanine + di-trans,octa-cis-undecaprenyl phosphate = di-trans,octa-cis-undecaprenyl diphospho-N-acetyl-alpha-D-muramoyl-L-alanyl-D-glutamyl-meso-2,6-diaminopimeloyl-D-alanyl-D-alanine + UMP. It participates in cell wall biogenesis; peptidoglycan biosynthesis. Its function is as follows. Catalyzes the initial step of the lipid cycle reactions in the biosynthesis of the cell wall peptidoglycan: transfers peptidoglycan precursor phospho-MurNAc-pentapeptide from UDP-MurNAc-pentapeptide onto the lipid carrier undecaprenyl phosphate, yielding undecaprenyl-pyrophosphoryl-MurNAc-pentapeptide, known as lipid I. The sequence is that of Phospho-N-acetylmuramoyl-pentapeptide-transferase from Vibrio vulnificus (strain CMCP6).